Reading from the N-terminus, the 642-residue chain is MSSQFFLKTSQDIELFQSYPTFEQSNTNSKDFPVISSVLSPCGRFLALSTKENVKVFTGPCLDNVLLTMKLSDVYDLHFSPAGNYLSTWERASIQDPNHKNVKVWYLNKPFKKDCVSEDIVPAYEYQAKSQSGWFLQFSKLDNYGLRLFKHDLKIVKLSSANADNFDFQSPFAVLSDDETSQHFTTYLISPAEHPTICTFTPEKGGKPAQLIIWALSEGKITKKIASKTFFKADSCQLKWNPLGNAILCLAITDFDSSNKSYYGENTLYLLSFQGVNGTLGGNSVRVSLTTGPVHDFTWSPTSRQFGVIAGYMPATISFFDLRGNVVHSLPQQAKNTMLFSPSGHYILIAGFGNLQGSVEILDRLDKFKCVSKFDATNTSVCKWSPGGEFIMTATTSPRLRVDNGVKIWHVSGSLVFVKEFKELLKVDWRSPCNYKTLENKDEAFFENHIINNWEPLPDSTTSSLDPKISNKSELQIHSSVQEYISQHPSREASSNGNGSKAKAGGAYKPPHARRTGGGRIVPGVPPGAAKKTIPGLVPGMSANKDANTKNRRRRANKKSSETSPDSTPAPSAPASTNAPTNNKETSPEEKKIRSLLKKLRAIETLKERQAVGDKLEDTQVLKIQTEEKVLKDLEKLGWKDE.

4 WD repeats span residues 69–115, 186–224, 289–331, and 374–419; these read MKLS…KKDC, TYLISPAEHPTICTFTPEKGGKPAQLIIWALSEGKITKK, LTTG…HSLP, and FDAT…VFVK. A disordered region spans residues 485–593; the sequence is ISQHPSREAS…KETSPEEKKI (109 aa). Low complexity-rich tracts occupy residues 493-507 and 563-583; these read ASSNGNGSKAKAGGA and TSPDSTPAPSAPASTNAPTNN. 3 positions are modified to phosphoserine: S564, S567, and S572.

This sequence belongs to the WD repeat EIF2A family. Ubiquitinated, probably leading to its degradation. May explain why it has a short half-life of 17 minutes.

Functionally, functions in the early steps of protein synthesis of a small number of specific mRNAs. Acts by directing the binding of methionyl-tRNAi to 40S ribosomal subunits. In contrast to the eIF-2 complex, it binds methionyl-tRNAi to 40S subunits in a codon-dependent manner, whereas the eIF-2 complex binds methionyl-tRNAi to 40S subunits in a GTP-dependent manner. Specifically associates with both 40S subunits and 80S ribosomes. This Saccharomyces cerevisiae (strain ATCC 204508 / S288c) (Baker's yeast) protein is Eukaryotic translation initiation factor 2A.